The following is a 246-amino-acid chain: Ribonuclease PH (246 aa).

Residues 67–87 form a disordered region; it reads NMLPGSTSPRKRRDRSGKVDG. Residues Arg-88 and 126–128 contribute to the phosphate site; that span reads GTR.

This sequence belongs to the RNase PH family. In terms of assembly, homohexameric ring arranged as a trimer of dimers.

The enzyme catalyses tRNA(n+1) + phosphate = tRNA(n) + a ribonucleoside 5'-diphosphate. Functionally, phosphorolytic 3'-5' exoribonuclease that plays an important role in tRNA 3'-end maturation. Removes nucleotide residues following the 3'-CCA terminus of tRNAs; can also add nucleotides to the ends of RNA molecules by using nucleoside diphosphates as substrates, but this may not be physiologically important. Probably plays a role in initiation of 16S rRNA degradation (leading to ribosome degradation) during starvation. The chain is Ribonuclease PH from Rhodopirellula baltica (strain DSM 10527 / NCIMB 13988 / SH1).